Consider the following 416-residue polypeptide: Nonsense-mediated decay protein 4 (416 aa).

Disordered regions lie at residues Met1–Asp21, Gln195–Ser218, and Asp356–Asp393. The span at Glu12–Asp21 shows a compositional bias: basic and acidic residues. Residues Lys360–Lys375 show a composition bias toward basic residues.

The protein resides in the cytoplasm. In terms of biological role, involved in nonsense-mediated decay of mRNAs containing premature stop codons. The polypeptide is Nonsense-mediated decay protein 4 (NMD4) (Debaryomyces hansenii (strain ATCC 36239 / CBS 767 / BCRC 21394 / JCM 1990 / NBRC 0083 / IGC 2968) (Yeast)).